Here is a 176-residue protein sequence, read N- to C-terminus: MSLLNVPAGKDLPEDIYVVIEIPANADPIKYEIDKESGALFVDRFMSTAMFYPCNYGYINHTLSLDGDPVDVLVPTPYPLQPGSVIRCRPVGVLKMTDEAGEDAKLVAVPHSKLSKEYDHIKDVNDLPELLKAQIAHFFEHYKDLEKGKWVKVEGWENAEAAKAEIVASFERAKNK.

The substrate site is built by Lys30, Arg44, and Tyr56. 3 residues coordinate Mg(2+): Asp66, Asp71, and Asp103. Tyr142 contacts substrate.

The protein belongs to the PPase family. As to quaternary structure, homohexamer. Requires Mg(2+) as cofactor.

It localises to the cytoplasm. The catalysed reaction is diphosphate + H2O = 2 phosphate + H(+). Functionally, catalyzes the hydrolysis of inorganic pyrophosphate (PPi) forming two phosphate ions. The polypeptide is Inorganic pyrophosphatase (Escherichia coli O157:H7).